The following is a 471-amino-acid chain: Probable ribonuclease FAU-1 (471 aa).

It belongs to the FAU-1 family.

In terms of biological role, probable RNase involved in rRNA stability through maturation and/or degradation of precursor rRNAs. Binds to RNA in loop regions with AU-rich sequences. The polypeptide is Probable ribonuclease FAU-1 (Aeropyrum pernix (strain ATCC 700893 / DSM 11879 / JCM 9820 / NBRC 100138 / K1)).